The primary structure comprises 450 residues: Bifunctional protein GlmU (450 aa).

The segment at 1 to 226 (MLAVAVLAAG…ADEVNGINNR (226 aa)) is pyrophosphorylase. UDP-N-acetyl-alpha-D-glucosamine contacts are provided by residues 7–10 (LAAG), K21, Q73, and 78–79 (GT). D103 is a Mg(2+) binding site. Residues G140, E155, N170, and N224 each coordinate UDP-N-acetyl-alpha-D-glucosamine. Residue N224 participates in Mg(2+) binding. The segment at 227-247 (RQLAQCEALLQQRLRHHWMDE) is linker. Positions 248 to 450 (GVTFIDPESC…TKEGWAERKV (203 aa)) are N-acetyltransferase. UDP-N-acetyl-alpha-D-glucosamine is bound by residues R329 and K347. H359 functions as the Proton acceptor in the catalytic mechanism. 2 residues coordinate UDP-N-acetyl-alpha-D-glucosamine: Y362 and N373. Residues A376, 382–383 (NY), A419, and R436 contribute to the acetyl-CoA site.

It in the N-terminal section; belongs to the N-acetylglucosamine-1-phosphate uridyltransferase family. In the C-terminal section; belongs to the transferase hexapeptide repeat family. Homotrimer. Mg(2+) is required as a cofactor.

Its subcellular location is the cytoplasm. The enzyme catalyses alpha-D-glucosamine 1-phosphate + acetyl-CoA = N-acetyl-alpha-D-glucosamine 1-phosphate + CoA + H(+). It catalyses the reaction N-acetyl-alpha-D-glucosamine 1-phosphate + UTP + H(+) = UDP-N-acetyl-alpha-D-glucosamine + diphosphate. It functions in the pathway nucleotide-sugar biosynthesis; UDP-N-acetyl-alpha-D-glucosamine biosynthesis; N-acetyl-alpha-D-glucosamine 1-phosphate from alpha-D-glucosamine 6-phosphate (route II): step 2/2. It participates in nucleotide-sugar biosynthesis; UDP-N-acetyl-alpha-D-glucosamine biosynthesis; UDP-N-acetyl-alpha-D-glucosamine from N-acetyl-alpha-D-glucosamine 1-phosphate: step 1/1. The protein operates within bacterial outer membrane biogenesis; LPS lipid A biosynthesis. Catalyzes the last two sequential reactions in the de novo biosynthetic pathway for UDP-N-acetylglucosamine (UDP-GlcNAc). The C-terminal domain catalyzes the transfer of acetyl group from acetyl coenzyme A to glucosamine-1-phosphate (GlcN-1-P) to produce N-acetylglucosamine-1-phosphate (GlcNAc-1-P), which is converted into UDP-GlcNAc by the transfer of uridine 5-monophosphate (from uridine 5-triphosphate), a reaction catalyzed by the N-terminal domain. The polypeptide is Bifunctional protein GlmU (Synechococcus sp. (strain CC9605)).